Consider the following 220-residue polypeptide: Phosphatidylserine decarboxylase proenzyme (220 aa).

Residue S188 is the Schiff-base intermediate with substrate; via pyruvic acid of the active site. At S188 the chain carries Pyruvic acid (Ser); by autocatalysis.

This sequence belongs to the phosphatidylserine decarboxylase family. PSD-A subfamily. Heterodimer of a large membrane-associated beta subunit and a small pyruvoyl-containing alpha subunit. Pyruvate serves as cofactor. Is synthesized initially as an inactive proenzyme. Formation of the active enzyme involves a self-maturation process in which the active site pyruvoyl group is generated from an internal serine residue via an autocatalytic post-translational modification. Two non-identical subunits are generated from the proenzyme in this reaction, and the pyruvate is formed at the N-terminus of the alpha chain, which is derived from the carboxyl end of the proenzyme. The post-translation cleavage follows an unusual pathway, termed non-hydrolytic serinolysis, in which the side chain hydroxyl group of the serine supplies its oxygen atom to form the C-terminus of the beta chain, while the remainder of the serine residue undergoes an oxidative deamination to produce ammonia and the pyruvoyl prosthetic group on the alpha chain.

The protein resides in the cell membrane. It carries out the reaction a 1,2-diacyl-sn-glycero-3-phospho-L-serine + H(+) = a 1,2-diacyl-sn-glycero-3-phosphoethanolamine + CO2. The protein operates within phospholipid metabolism; phosphatidylethanolamine biosynthesis; phosphatidylethanolamine from CDP-diacylglycerol: step 2/2. Catalyzes the formation of phosphatidylethanolamine (PtdEtn) from phosphatidylserine (PtdSer). This chain is Phosphatidylserine decarboxylase proenzyme, found in Cytophaga hutchinsonii (strain ATCC 33406 / DSM 1761 / CIP 103989 / NBRC 15051 / NCIMB 9469 / D465).